The chain runs to 513 residues: Histidine--tRNA ligase (513 aa).

A mitochondrion-targeting transit peptide spans 1–24 (MADKAQLQEAIKTQGEVVRKLKSE). One can recognise a WHEP-TRS domain in the interval 3 to 59 (DKAQLQEAIKTQGEVVRKLKSEKASKEQIDEEVARLLQLKAQLGGDEGKHVFVLKTA). Residues 130-132 (DLT), arginine 157, glutamine 173, aspartate 177, arginine 326, and 330-331 (YY) each bind L-histidine.

Belongs to the class-II aminoacyl-tRNA synthetase family.

The protein localises to the cytoplasm. It is found in the mitochondrion. It carries out the reaction tRNA(His) + L-histidine + ATP = L-histidyl-tRNA(His) + AMP + diphosphate + H(+). Functionally, catalyzes the aminoacylation of histidyl-tRNA. The chain is Histidine--tRNA ligase from Danio rerio (Zebrafish).